The following is a 463-amino-acid chain: Bifunctional protein GlmU (463 aa).

Residues 1–233 are pyrophosphorylase; that stretch reads MSKKSTFIIL…NFEVMGINSR (233 aa). UDP-N-acetyl-alpha-D-glucosamine is bound by residues 10 to 13, Lys24, Gln76, 81 to 82, 104 to 106, Gly143, Glu158, Asn173, and Asn231; these read LAAG, GT, and YGD. Asp106 is a binding site for Mg(2+). Asn231 provides a ligand contact to Mg(2+). A linker region spans residues 234-254; the sequence is YELFVAEQELKLRINKEHLSK. The interval 255–463 is N-acetyltransferase; the sequence is GVQIIDIYST…LRRKQMYENR (209 aa). Positions 336 and 354 each coordinate UDP-N-acetyl-alpha-D-glucosamine. The Proton acceptor role is filled by His366. UDP-N-acetyl-alpha-D-glucosamine is bound by residues Tyr369 and Asn380. Residues 389–390, Ala426, and Arg443 contribute to the acetyl-CoA site; that span reads NY.

This sequence in the N-terminal section; belongs to the N-acetylglucosamine-1-phosphate uridyltransferase family. It in the C-terminal section; belongs to the transferase hexapeptide repeat family. As to quaternary structure, homotrimer. Mg(2+) is required as a cofactor.

The protein resides in the cytoplasm. The enzyme catalyses alpha-D-glucosamine 1-phosphate + acetyl-CoA = N-acetyl-alpha-D-glucosamine 1-phosphate + CoA + H(+). It carries out the reaction N-acetyl-alpha-D-glucosamine 1-phosphate + UTP + H(+) = UDP-N-acetyl-alpha-D-glucosamine + diphosphate. It participates in nucleotide-sugar biosynthesis; UDP-N-acetyl-alpha-D-glucosamine biosynthesis; N-acetyl-alpha-D-glucosamine 1-phosphate from alpha-D-glucosamine 6-phosphate (route II): step 2/2. The protein operates within nucleotide-sugar biosynthesis; UDP-N-acetyl-alpha-D-glucosamine biosynthesis; UDP-N-acetyl-alpha-D-glucosamine from N-acetyl-alpha-D-glucosamine 1-phosphate: step 1/1. Its pathway is bacterial outer membrane biogenesis; LPS lipid A biosynthesis. In terms of biological role, catalyzes the last two sequential reactions in the de novo biosynthetic pathway for UDP-N-acetylglucosamine (UDP-GlcNAc). The C-terminal domain catalyzes the transfer of acetyl group from acetyl coenzyme A to glucosamine-1-phosphate (GlcN-1-P) to produce N-acetylglucosamine-1-phosphate (GlcNAc-1-P), which is converted into UDP-GlcNAc by the transfer of uridine 5-monophosphate (from uridine 5-triphosphate), a reaction catalyzed by the N-terminal domain. This is Bifunctional protein GlmU from Caldicellulosiruptor saccharolyticus (strain ATCC 43494 / DSM 8903 / Tp8T 6331).